The sequence spans 1003 residues: MSNVPLATKTIRKLSNRKYEIKIYLKDENTCFERVVDMVVPLYDVCNETSGVTLESCSPNIEVIELDNTHVRIKVHGDTLKEMCFELLFPCNVNEAQVWKYVSRLLLDNVSHNDVKYKLANFRLTLNGKHLKLKEIDQPLFIYFVDDLGNYGLITKENIQNNNLQVNKDASFITIFPQYAYICLGRKVYLNEKVTFDVTTDATNITLDFNKSVNIAVSFLDIYYEVNNNEQKDLLKDLLKRYGEFEVYNADTGLIYAKNLSIKNYDTVIQVERLPVNLKVRAYTKDENGRNLCLMKITSSTEVDPEYVTSNNALLGTLRVYKKFDKSHLKIVMHNRGSGNVFPLRSLYLELSNVKGYPVKASDTSRLDVGIYKLNKIYVDNDENKIILEEIEAEYRCGRQVFHERVKLNKHQCKYTPKCPFQFVVNSPDTTIHLYGISNVCLKPKVPKNLRLWGWILDCDTSRFIKHMADGSDDLDLDVRLNRNDICLKQAIKQHYTNVIILEYANTYPNCTLSLGNNRFNNVFDMNDNKTISEYTNFTKSRQDLNNMSCILGINIGNSVNISSLPGWVTPHEAKILRSGCARVREFCKSFCDLSNKRFYAMARDLVSLLFMCNYVNIEINEAVCEYPGYVILFARAIKVINDLLLINGVDNLAGYSISLPIHYGSTEKTLPNEKYGGVDKKFKYLFLKNKLKDLMRDADFVQPPLYISTYFRTLLDAPPTDNYEKYLVDSSVQSQDVLQGLLNTCNTIDTNARVASSVIGYVYEPCGTSEHKIGSEALCKMAKEASRLGNLGLVNRINESNYNKCNKYGYRGVYENNKLKTKYYREIFDCNPNNNNELISRYGYRIMDLHKIGEIFANYDESESPCERRCHYLEDRGLLYGPEYVHHRYQESCTPNTFGNNTNCVTRNGEQHVYENSCGDNATCGRRTGYGRRSRDEWNDYRKPHVYDNCADANSSSSDSCSDSSSSSESESDSDGCCDTDASLDSDIENCYQNPSKCDAGC.

Ser-2 is modified (N-acetylserine; by host). The span at 953 to 970 (DANSSSSDSCSDSSSSSE) shows a compositional bias: low complexity. The segment at 953 to 979 (DANSSSSDSCSDSSSSSESESDSDGCC) is disordered.

In terms of assembly, may form disulfide-bond-linked aggregates.

In terms of biological role, major component of viral occlusion bodies, the protective complexes in which the virions are embedded in the cytoplasm of their insect hosts. The polypeptide is Spheroidin (Amsacta (AmEPV)).